The chain runs to 479 residues: tRNA modification GTPase MnmE (479 aa).

(6S)-5-formyl-5,6,7,8-tetrahydrofolate contacts are provided by Arg30, Glu91, and Lys130. The TrmE-type G domain occupies 226–402; the sequence is GFRIVLTGLP…VLKDLVKEFA (177 aa). K(+) is bound at residue Asn236. GTP is bound by residues 236 to 241, 255 to 261, and 280 to 283; these read NVGKSS, TDIPGTT, and DTAG. Ser240 lines the Mg(2+) pocket. Residues Thr255, Ile257, and Thr260 each contribute to the K(+) site. Thr261 contributes to the Mg(2+) binding site. Lys479 is a binding site for (6S)-5-formyl-5,6,7,8-tetrahydrofolate.

This sequence belongs to the TRAFAC class TrmE-Era-EngA-EngB-Septin-like GTPase superfamily. TrmE GTPase family. Homodimer. Heterotetramer of two MnmE and two MnmG subunits. It depends on K(+) as a cofactor.

It is found in the cytoplasm. Its function is as follows. Exhibits a very high intrinsic GTPase hydrolysis rate. Involved in the addition of a carboxymethylaminomethyl (cmnm) group at the wobble position (U34) of certain tRNAs, forming tRNA-cmnm(5)s(2)U34. The polypeptide is tRNA modification GTPase MnmE (Bdellovibrio bacteriovorus (strain ATCC 15356 / DSM 50701 / NCIMB 9529 / HD100)).